The following is a 400-amino-acid chain: Endoglucanase 5A (400 aa).

The first 26 residues, M1–A26, serve as a signal peptide directing secretion. Substrate is bound by residues H61, W65 to Y66, Y92, and H127. E165 acts as the Proton donor in catalysis. Y228 contacts substrate. Catalysis depends on E254, which acts as the Nucleophile. Substrate-binding positions include A260–T261, W288, and K293–E295. Residues E328 to N363 form a disordered region. The span at P334–D353 shows a compositional bias: pro residues. The region spanning Y357–W396 is the Chitin-binding type-3 domain.

The protein belongs to the glycosyl hydrolase 5 (cellulase A) family. In terms of assembly, monomer.

The protein localises to the secreted. The catalysed reaction is Endohydrolysis of (1-&gt;4)-beta-D-glucosidic linkages in cellulose, lichenin and cereal beta-D-glucans.. This is Endoglucanase 5A (cel5A) from Salipaludibacillus agaradhaerens (Bacillus agaradhaerens).